The following is a 347-amino-acid chain: Succinylglutamate desuccinylase (347 aa).

Residues His-64, Glu-67, and His-159 each coordinate Zn(2+). Glu-222 is a catalytic residue.

The protein belongs to the AspA/AstE family. Succinylglutamate desuccinylase subfamily. Zn(2+) is required as a cofactor.

It catalyses the reaction N-succinyl-L-glutamate + H2O = L-glutamate + succinate. Its pathway is amino-acid degradation; L-arginine degradation via AST pathway; L-glutamate and succinate from L-arginine: step 5/5. In terms of biological role, transforms N(2)-succinylglutamate into succinate and glutamate. The sequence is that of Succinylglutamate desuccinylase from Burkholderia cenocepacia (strain ATCC BAA-245 / DSM 16553 / LMG 16656 / NCTC 13227 / J2315 / CF5610) (Burkholderia cepacia (strain J2315)).